Reading from the N-terminus, the 450-residue chain is tRNA modification GTPase MnmE (450 aa).

Residues Arg-23, Glu-79, and Lys-118 each coordinate (6S)-5-formyl-5,6,7,8-tetrahydrofolate. Residues 214-374 (GITLILVGKP…LKDHILAKVG (161 aa)) form the TrmE-type G domain. Asn-224 serves as a coordination point for K(+). Residues 224-229 (NAGKSS), 243-249 (TSIAGTT), and 268-271 (DTAG) each bind GTP. Ser-228 provides a ligand contact to Mg(2+). Residues Thr-243, Ile-245, and Thr-248 each coordinate K(+). Residue Thr-249 coordinates Mg(2+). Position 450 (Lys-450) interacts with (6S)-5-formyl-5,6,7,8-tetrahydrofolate.

It belongs to the TRAFAC class TrmE-Era-EngA-EngB-Septin-like GTPase superfamily. TrmE GTPase family. In terms of assembly, homodimer. Heterotetramer of two MnmE and two MnmG subunits. The cofactor is K(+).

It is found in the cytoplasm. Exhibits a very high intrinsic GTPase hydrolysis rate. Involved in the addition of a carboxymethylaminomethyl (cmnm) group at the wobble position (U34) of certain tRNAs, forming tRNA-cmnm(5)s(2)U34. The polypeptide is tRNA modification GTPase MnmE (Francisella philomiragia subsp. philomiragia (strain ATCC 25017 / CCUG 19701 / FSC 153 / O#319-036)).